Consider the following 137-residue polypeptide: Large ribosomal subunit protein uL16 (137 aa).

It belongs to the universal ribosomal protein uL16 family. In terms of assembly, part of the 50S ribosomal subunit.

Its function is as follows. Binds 23S rRNA and is also seen to make contacts with the A and possibly P site tRNAs. The polypeptide is Large ribosomal subunit protein uL16 (Mycoplasma capricolum subsp. capricolum (strain California kid / ATCC 27343 / NCTC 10154)).